Reading from the N-terminus, the 289-residue chain is Oxaloacetate decarboxylase (289 aa).

Ser-47 contacts substrate. Residue Asp-85 coordinates Mg(2+). Arg-156 and His-232 together coordinate substrate.

The protein belongs to the isocitrate lyase/PEP mutase superfamily. Oxaloacetate decarboxylase family. Homotetramer; dimer of dimers. Mg(2+) serves as cofactor.

The enzyme catalyses oxaloacetate + H(+) = pyruvate + CO2. Its function is as follows. Catalyzes the decarboxylation of oxaloacetate into pyruvate. Seems to play a role in maintaining cellular concentrations of bicarbonate and pyruvate. The protein is Oxaloacetate decarboxylase of Rhodopseudomonas palustris (strain BisA53).